We begin with the raw amino-acid sequence, 750 residues long: MIIRSPEPEVKIVVDRDPVKTSFEEWARPGHFSRTLAKGPDTTTWIWNLHADAHDFDSHTGDLEEISRKVFSAHFGQLSIIFLWLSGMYFHGARFSNYEAWLSDPTHIGPSAQVVWPIVGQEILNGDVGGGFRGIQITSGFFQLWRASGITSELQLYCTAIGALIFAALMLFAGWFHYHKAAPKLAWFQDVESMLNHHLAGLLGLGSLSWAGHQIHVSLPINQFLDAGVDPKEIPLPHEFILNRDLLAQLYPSFAEGATPFFTLNWSKYAEFLTFRGGLDPVTGGLWLTDIAHHHLAIAILFLIAGHMYRTNWGIGHGLKDILEAHKGPFTGQGHKGLYEILTTSWHAQLSLNLAMLGSTTIVVAHHMYAMPPYPYLATDYGTQLSLFTHHMWIGGFLIVGAAAHAAIFMVRDYDPTTRYNDLLDRVLRHRDAIISHLNWVCIFLGFHSFGLYIHNDTMSALGRPQDMFSDTAIQLQPIFAQWVQNIHATAPGVTAPGATTSTSLTWGGGELVAVGGKVALLPIPLGTADFLVHHIHAFTIHVTVLILLKGVLFARSSRLIPDKANLGFRFPCDGPGRGGTCQVSAWDHVFLGLFWMYNAISVVIFHFSWKMQSDVWGTISDQGVVTHITGGNFAQSSITINGWLRDFLWAQASQVIQSYGSSLSAYGLFFLGAHFVWAFSLMFLFSGRGYWQELIESIVWAHNKLKVAPATQPRALSIIQGRAVGVTHYLLGGIATTWAFFLARIIAVG.

A run of 8 helical transmembrane segments spans residues 70–93, 156–179, 195–219, 291–309, 346–369, 385–411, 433–455, and 531–549; these read VFSA…FHGA, LYCT…FHYH, LNHH…HVSL, IAHH…GHMY, WHAQ…HHMY, LSLF…IFMV, AIIS…LYIH, and FLVH…LILL. Positions 573 and 582 each coordinate [4Fe-4S] cluster. 2 helical membrane passes run 589 to 610 and 664 to 686; these read HVFL…HFSW and LSAY…MFLF. Chlorophyll a' is bound at residue His-675. Chlorophyll a contacts are provided by Met-683 and Tyr-691. Trp-692 contributes to the phylloquinone binding site. The chain crosses the membrane as a helical span at residues 724-744; it reads AVGVTHYLLGGIATTWAFFLA.

Belongs to the PsaA/PsaB family. As to quaternary structure, the PsaA/B heterodimer binds the P700 chlorophyll special pair and subsequent electron acceptors. PSI consists of a core antenna complex that captures photons, and an electron transfer chain that converts photonic excitation into a charge separation. The eukaryotic PSI reaction center is composed of at least 11 subunits. It depends on P700 is a chlorophyll a/chlorophyll a' dimer, A0 is one or more chlorophyll a, A1 is one or both phylloquinones and FX is a shared 4Fe-4S iron-sulfur center. as a cofactor.

It is found in the plastid. The protein resides in the chloroplast thylakoid membrane. The enzyme catalyses reduced [plastocyanin] + hnu + oxidized [2Fe-2S]-[ferredoxin] = oxidized [plastocyanin] + reduced [2Fe-2S]-[ferredoxin]. PsaA and PsaB bind P700, the primary electron donor of photosystem I (PSI), as well as the electron acceptors A0, A1 and FX. PSI is a plastocyanin-ferredoxin oxidoreductase, converting photonic excitation into a charge separation, which transfers an electron from the donor P700 chlorophyll pair to the spectroscopically characterized acceptors A0, A1, FX, FA and FB in turn. Oxidized P700 is reduced on the lumenal side of the thylakoid membrane by plastocyanin. The polypeptide is Photosystem I P700 chlorophyll a apoprotein A1 (Agrostis stolonifera (Creeping bentgrass)).